Consider the following 371-residue polypeptide: Queuine tRNA-ribosyltransferase (371 aa).

Asp90 (proton acceptor) is an active-site residue. Residues 90 to 94 (DSGGF), Asp144, Gln189, and Gly215 contribute to the substrate site. Positions 246–252 (GVGTPEN) are RNA binding. The active-site Nucleophile is Asp265. An RNA binding; important for wobble base 34 recognition region spans residues 270 to 274 (TRNAR). The Zn(2+) site is built by Cys303, Cys305, Cys308, and His334.

Belongs to the queuine tRNA-ribosyltransferase family. Homodimer. Within each dimer, one monomer is responsible for RNA recognition and catalysis, while the other monomer binds to the replacement base PreQ1. It depends on Zn(2+) as a cofactor.

It carries out the reaction 7-aminomethyl-7-carbaguanine + guanosine(34) in tRNA = 7-aminomethyl-7-carbaguanosine(34) in tRNA + guanine. Its pathway is tRNA modification; tRNA-queuosine biosynthesis. Catalyzes the base-exchange of a guanine (G) residue with the queuine precursor 7-aminomethyl-7-deazaguanine (PreQ1) at position 34 (anticodon wobble position) in tRNAs with GU(N) anticodons (tRNA-Asp, -Asn, -His and -Tyr). Catalysis occurs through a double-displacement mechanism. The nucleophile active site attacks the C1' of nucleotide 34 to detach the guanine base from the RNA, forming a covalent enzyme-RNA intermediate. The proton acceptor active site deprotonates the incoming PreQ1, allowing a nucleophilic attack on the C1' of the ribose to form the product. After dissociation, two additional enzymatic reactions on the tRNA convert PreQ1 to queuine (Q), resulting in the hypermodified nucleoside queuosine (7-(((4,5-cis-dihydroxy-2-cyclopenten-1-yl)amino)methyl)-7-deazaguanosine). The sequence is that of Queuine tRNA-ribosyltransferase from Helicobacter pylori (strain J99 / ATCC 700824) (Campylobacter pylori J99).